The primary structure comprises 596 residues: Elongation factor 4 (596 aa).

The region spanning 2–184 (KHIRNFSIIA…TIVAQIPPPE (183 aa)) is the tr-type G domain. GTP contacts are provided by residues 14–19 (DHGKST) and 131–134 (NKID).

It belongs to the TRAFAC class translation factor GTPase superfamily. Classic translation factor GTPase family. LepA subfamily.

The protein localises to the cell inner membrane. It carries out the reaction GTP + H2O = GDP + phosphate + H(+). Its function is as follows. Required for accurate and efficient protein synthesis under certain stress conditions. May act as a fidelity factor of the translation reaction, by catalyzing a one-codon backward translocation of tRNAs on improperly translocated ribosomes. Back-translocation proceeds from a post-translocation (POST) complex to a pre-translocation (PRE) complex, thus giving elongation factor G a second chance to translocate the tRNAs correctly. Binds to ribosomes in a GTP-dependent manner. The polypeptide is Elongation factor 4 (Shewanella loihica (strain ATCC BAA-1088 / PV-4)).